The following is a 200-amino-acid chain: Small ribosomal subunit protein uS4 (200 aa).

Residues 21–42 (GTGKELQKRPYPPGQHGPGQRR) are disordered. An S4 RNA-binding domain is found at 92-155 (SRLDNLVYRL…RNLQVIKEAI (64 aa)).

The protein belongs to the universal ribosomal protein uS4 family. As to quaternary structure, part of the 30S ribosomal subunit. Contacts protein S5. The interaction surface between S4 and S5 is involved in control of translational fidelity.

One of the primary rRNA binding proteins, it binds directly to 16S rRNA where it nucleates assembly of the body of the 30S subunit. In terms of biological role, with S5 and S12 plays an important role in translational accuracy. This chain is Small ribosomal subunit protein uS4, found in Geobacillus thermodenitrificans (strain NG80-2).